The following is a 412-amino-acid chain: Glucose/galactose transporter (412 aa).

11 helical membrane passes run 21 to 41 (YGFA…ITCL), 62 to 82 (LIQF…GQLV), 90 to 110 (GIVV…PAAS), 113 to 133 (VYAL…ILQV), 158 to 178 (FNSL…LSAA), 192 to 212 (FPYL…AILK), 239 to 259 (LGAI…SFLV), 310 to 330 (AFVA…IAMW), 331 to 351 (SVLA…SLAL), 363 to 383 (GILC…GALA), and 388 to 408 (IHLA…YGLI).

The protein belongs to the major facilitator superfamily. FHS transporter (TC 2.A.1.7) family.

Its subcellular location is the cell inner membrane. Its function is as follows. Intake of glucose and galactose. The chain is Glucose/galactose transporter (gluP) from Brucella abortus (strain 2308).